The primary structure comprises 255 residues: Glutamate racemase (255 aa).

Residues 7–8 (DS) and 39–40 (YG) contribute to the substrate site. Cys-70 functions as the Proton donor/acceptor in the catalytic mechanism. 71–72 (NT) serves as a coordination point for substrate. Cys-181 (proton donor/acceptor) is an active-site residue. Substrate is bound at residue 182 to 183 (TH).

This sequence belongs to the aspartate/glutamate racemases family.

The enzyme catalyses L-glutamate = D-glutamate. It functions in the pathway cell wall biogenesis; peptidoglycan biosynthesis. Provides the (R)-glutamate required for cell wall biosynthesis. In Helicobacter pylori (strain HPAG1), this protein is Glutamate racemase.